We begin with the raw amino-acid sequence, 158 residues long: Cysteine proteinase inhibitor 4 (158 aa).

A signal peptide spans 1–24 (MAARCPVGVASVLLLIVLVTVASA). A disordered region spans residues 26-51 (SGARSGGGGGGGIRELRGGGAGRRVG). A compositionally biased stretch (gly residues) spans 29–49 (RSGGGGGGGIRELRGGGAGRR). One can recognise a Cystatin domain in the interval 51–116 (GGRTEVRDVE…KYYLRVAAAE (66 aa)). The short motif at 101–105 (QVVSG) is the Secondary area of contact element.

The protein belongs to the cystatin family. Phytocystatin subfamily.

The protein resides in the secreted. Its function is as follows. Specific inhibitor of cysteine proteinases. Probably involved in the regulation of endogenous processes and in defense against pests and pathogens. This Oryza sativa subsp. japonica (Rice) protein is Cysteine proteinase inhibitor 4.